The primary structure comprises 226 residues: Thioredoxin domain-containing protein 9 (226 aa).

The 106-residue stretch at 75–180 folds into the Thioredoxin domain; sequence EIGSERDFFQ…TTETLEWRLG (106 aa). 3 positions are modified to phosphoserine: Ser188, Ser221, and Ser223.

In terms of assembly, forms ternary complexes with the chaperonin TCP1 complex, spanning the cylindrical chaperonin cavity and contacting at least 2 subunits. Expressed in testis, liver, heart, kidney, brain, spleen and lung.

The protein resides in the cytoplasm. Its subcellular location is the nucleus. It localises to the cytoskeleton. It is found in the microtubule organizing center. The protein localises to the centrosome. The protein resides in the midbody. Significantly diminishes the chaperonin TCP1 complex ATPase activity, thus negatively impacts protein folding, including that of actin or tubulin. In Mus musculus (Mouse), this protein is Thioredoxin domain-containing protein 9 (Txndc9).